A 361-amino-acid chain; its full sequence is MAGNTLGQLFRVTTFGESHGLALGCIIDGVPPGIALSEADLQHDLDRRRPGTSRYTTQRREPDQVKILSGVFEGVTTGTSIGLLIENTDQRSQDYSAIKDVFRPGHADYTYEQKYGLRDYRGGGRSSARETAMRVAAGAIAKKYLAQKFGIVIRACLTQMGDIPLEIKDWAQVEQNPFFSPDVDKLEALDELMRALKKEGDSIGAKVTVVADNVPPGLGEPVFDRLDADIAHALMSINAVKGVEIGEGFGVVALKGSENRDEITKEGFQSNHAGGILGGISSGQQIVANIALKPTSSITVPGRTVNRFGEEVEMITRGRHDPCVGIRAVPIAEAMMAIVLMDHLLRHRAQNADVTTTLPRW.

Residues Arg-48 and Arg-54 each coordinate NADP(+). FMN is bound by residues 125-127 (RSS), 238-239 (NA), Gly-278, 293-297 (KPTSS), and Arg-319.

This sequence belongs to the chorismate synthase family. In terms of assembly, homotetramer. FMNH2 is required as a cofactor.

The enzyme catalyses 5-O-(1-carboxyvinyl)-3-phosphoshikimate = chorismate + phosphate. It participates in metabolic intermediate biosynthesis; chorismate biosynthesis; chorismate from D-erythrose 4-phosphate and phosphoenolpyruvate: step 7/7. Functionally, catalyzes the anti-1,4-elimination of the C-3 phosphate and the C-6 proR hydrogen from 5-enolpyruvylshikimate-3-phosphate (EPSP) to yield chorismate, which is the branch point compound that serves as the starting substrate for the three terminal pathways of aromatic amino acid biosynthesis. This reaction introduces a second double bond into the aromatic ring system. The sequence is that of Chorismate synthase from Cronobacter sakazakii (strain ATCC BAA-894) (Enterobacter sakazakii).